Here is an 89-residue protein sequence, read N- to C-terminus: Translation initiation factor IF-1, chloroplastic (89 aa).

The S1-like domain maps to 1-73; the sequence is MKEKEAKWVV…TKGRIIYRLP (73 aa).

It belongs to the IF-1 family. Component of the 30S ribosomal translation pre-initiation complex which assembles on the 30S ribosome in the order IF-2 and IF-3, IF-1 and N-formylmethionyl-tRNA(fMet); mRNA recruitment can occur at any time during PIC assembly.

It is found in the plastid. The protein localises to the chloroplast. In terms of biological role, one of the essential components for the initiation of protein synthesis. Stabilizes the binding of IF-2 and IF-3 on the 30S subunit to which N-formylmethionyl-tRNA(fMet) subsequently binds. Helps modulate mRNA selection, yielding the 30S pre-initiation complex (PIC). Upon addition of the 50S ribosomal subunit IF-1, IF-2 and IF-3 are released leaving the mature 70S translation initiation complex. This is Translation initiation factor IF-1, chloroplastic from Jasminum nudiflorum (Winter jasmine).